The chain runs to 56 residues: uncharacterized protein (56 aa).

This is an uncharacterized protein from Bacillus subtilis (strain 168).